The sequence spans 359 residues: Type-1 angiotensin II receptor (359 aa).

Residues 1–25 are Extracellular-facing; the sequence is MILNSSTEDGIKRIQDDCPKAGRHN. The N-linked (GlcNAc...) (complex) asparagine glycan is linked to asparagine 4. Residues glutamine 15 and aspartate 17 each contribute to the angiotensin II site. Intrachain disulfides connect cysteine 18-cysteine 274 and cysteine 101-cysteine 180. A helical membrane pass occupies residues 26 to 55; sequence YIFVMIPTLYSIIFVVGIFGNSLVVIVIYF. Over 56 to 61 the chain is Cytoplasmic; sequence YMKLKT. Residues 62–89 traverse the membrane as a helical segment; sequence VASVFLLNLALADLCFLLTLPLWAVYTA. Residues 90–98 are Extracellular-facing; the sequence is MEYRWPFGN. The chain crosses the membrane as a helical span at residues 99-125; sequence YLCKIASASVSFNLYASVFLLTCLSID. Topologically, residues 126–141 are cytoplasmic; the sequence is RYLAIVHPMKSRLRRT. Residues 142-165 traverse the membrane as a helical segment; that stretch reads MLVAKVTCIIIWLLAGLASLPAII. Residues 166 to 190 are Extracellular-facing; sequence HRNVFFIENTNITVCAFHYESQNST. Position 167 (arginine 167) interacts with angiotensin II. N-linked (GlcNAc...) asparagine glycosylation is present at asparagine 176. Residues phenylalanine 182, histidine 183, and tyrosine 184 each contribute to the angiotensin II site. The N-linked (GlcNAc...) asparagine glycan is linked to asparagine 188. The chain crosses the membrane as a helical span at residues 191–216; it reads LPIGLGLTKNILGFLFPFLIILTSYT. An angiotensin II-binding site is contributed by lysine 199. Topologically, residues 217 to 239 are cytoplasmic; it reads LIWKALKKAYEIQKNKPRNDDIF. Residues 240–268 form a helical membrane-spanning segment; the sequence is KIIMAIVLFFFFSWIPHQIFTFLDVLIQL. The Extracellular segment spans residues 269-278; that stretch reads GIIRDCRIAD. The helical transmembrane segment at 279-304 threads the bilayer; sequence IVDTAMPITICIAYFNNCLNPLFYGF. Topologically, residues 305–359 are cytoplasmic; it reads LGKKFKRYFLQLLKYIPPKAKSHSNLSTKMSTLSYRPSDNVSSSTKKPAPCFEVE. The segment covering 335–350 has biased composition (polar residues); it reads STLSYRPSDNVSSSTK. The disordered stretch occupies residues 335-359; it reads STLSYRPSDNVSSSTKKPAPCFEVE. A lipid anchor (S-palmitoyl cysteine) is attached at cysteine 355.

This sequence belongs to the G-protein coupled receptor 1 family. Interacts with MAS1. Interacts with ARRB1. Interacts with FLNA (via filamin repeat 21); increases PKA-mediated phosphorylation of FLNA. In terms of processing, C-terminal Ser or Thr residues may be phosphorylated. As to expression, liver, lung, adrenal and adrenocortical adenomas.

Its subcellular location is the cell membrane. Strongly inhibited by anti-hypertensive drugs losartan, candesartan, valsartan, irbesartan, telmisartan, eprosartan, olmesartan and azilsartan, most of which share a common biphenyl-tetrazole scaffold. Receptor for angiotensin II, a vasoconstricting peptide, which acts as a key regulator of blood pressure and sodium retention by the kidney. The activated receptor in turn couples to G-alpha proteins G(q) (GNAQ, GNA11, GNA14 or GNA15) and thus activates phospholipase C and increases the cytosolic Ca(2+) concentrations, which in turn triggers cellular responses such as stimulation of protein kinase C. In terms of biological role, (Microbial infection) During SARS coronavirus-2/SARS-CoV-2 infection, it is able to recognize and internalize the complex formed by secreted ACE2 and SARS-CoV-2 spike protein through DNM2/dynamin 2-dependent endocytosis. This chain is Type-1 angiotensin II receptor, found in Homo sapiens (Human).